Consider the following 254-residue polypeptide: Leucyl/phenylalanyl-tRNA--protein transferase (254 aa).

It belongs to the L/F-transferase family.

The protein resides in the cytoplasm. It carries out the reaction N-terminal L-lysyl-[protein] + L-leucyl-tRNA(Leu) = N-terminal L-leucyl-L-lysyl-[protein] + tRNA(Leu) + H(+). The catalysed reaction is N-terminal L-arginyl-[protein] + L-leucyl-tRNA(Leu) = N-terminal L-leucyl-L-arginyl-[protein] + tRNA(Leu) + H(+). It catalyses the reaction L-phenylalanyl-tRNA(Phe) + an N-terminal L-alpha-aminoacyl-[protein] = an N-terminal L-phenylalanyl-L-alpha-aminoacyl-[protein] + tRNA(Phe). Functions in the N-end rule pathway of protein degradation where it conjugates Leu, Phe and, less efficiently, Met from aminoacyl-tRNAs to the N-termini of proteins containing an N-terminal arginine or lysine. The sequence is that of Leucyl/phenylalanyl-tRNA--protein transferase from Burkholderia cenocepacia (strain HI2424).